Reading from the N-terminus, the 944-residue chain is Translation factor GUF1 homolog, mitochondrial (944 aa).

The region spanning 201-379 is the tr-type G domain; that stretch reads KNVRNFCILA…IITDIPYPPI (179 aa). Residues 210–217, 271–275, and 325–328 contribute to the GTP site; these read AHIDSGKS, DTPGH, and NKID.

It belongs to the TRAFAC class translation factor GTPase superfamily. Classic translation factor GTPase family. LepA subfamily.

It is found in the mitochondrion inner membrane. The enzyme catalyses GTP + H2O = GDP + phosphate + H(+). Functionally, promotes mitochondrial protein synthesis. May act as a fidelity factor of the translation reaction, by catalyzing a one-codon backward translocation of tRNAs on improperly translocated ribosomes. Binds to mitochondrial ribosomes in a GTP-dependent manner. The polypeptide is Translation factor GUF1 homolog, mitochondrial (Plasmodium yoelii yoelii).